Consider the following 625-residue polypeptide: Chaperone protein HtpG (625 aa).

The a; substrate-binding stretch occupies residues 1–337 (MSTNQETRGF…TNDLPLNVSR (337 aa)). The b stretch occupies residues 338-554 (EILQENKITA…NDEMTTQMAK (217 aa)). Residues 555-625 (LFAAMGQKAP…FIKRMNKLLG (71 aa)) form a c region.

It belongs to the heat shock protein 90 family. As to quaternary structure, homodimer.

Its subcellular location is the cytoplasm. Functionally, molecular chaperone. Has ATPase activity. The polypeptide is Chaperone protein HtpG (Actinobacillus pleuropneumoniae serotype 5b (strain L20)).